A 245-amino-acid polypeptide reads, in one-letter code: Biosynthetic peptidoglycan transglycosylase (245 aa).

The chain crosses the membrane as a helical span at residues 20–42 (VYAGSVFAGAWLATQLFYLAQIA).

It belongs to the glycosyltransferase 51 family.

Its subcellular location is the cell inner membrane. The enzyme catalyses [GlcNAc-(1-&gt;4)-Mur2Ac(oyl-L-Ala-gamma-D-Glu-L-Lys-D-Ala-D-Ala)](n)-di-trans,octa-cis-undecaprenyl diphosphate + beta-D-GlcNAc-(1-&gt;4)-Mur2Ac(oyl-L-Ala-gamma-D-Glu-L-Lys-D-Ala-D-Ala)-di-trans,octa-cis-undecaprenyl diphosphate = [GlcNAc-(1-&gt;4)-Mur2Ac(oyl-L-Ala-gamma-D-Glu-L-Lys-D-Ala-D-Ala)](n+1)-di-trans,octa-cis-undecaprenyl diphosphate + di-trans,octa-cis-undecaprenyl diphosphate + H(+). It functions in the pathway cell wall biogenesis; peptidoglycan biosynthesis. Peptidoglycan polymerase that catalyzes glycan chain elongation from lipid-linked precursors. The protein is Biosynthetic peptidoglycan transglycosylase of Burkholderia lata (strain ATCC 17760 / DSM 23089 / LMG 22485 / NCIMB 9086 / R18194 / 383).